A 181-amino-acid polypeptide reads, in one-letter code: Oligoribonuclease (181 aa).

The Exonuclease domain occupies 8-171; sequence LIWIDLEMTG…QDIQESIAEL (164 aa). Residue Y129 is part of the active site.

Belongs to the oligoribonuclease family.

The protein resides in the cytoplasm. In terms of biological role, 3'-to-5' exoribonuclease specific for small oligoribonucleotides. This is Oligoribonuclease from Shewanella sp. (strain MR-4).